The following is an 853-amino-acid chain: Probable inorganic carbon transporter subunit DabA (853 aa).

Residues 1 to 21 (MSHANSEETMMNTAVAHPSTS) form a disordered region. Over residues 7–21 (EETMMNTAVAHPSTS) the composition is skewed to polar residues. Zn(2+)-binding residues include cysteine 364, aspartate 366, histidine 546, and cysteine 561.

The protein belongs to the inorganic carbon transporter (TC 9.A.2) DabA family. In terms of assembly, forms a complex with DabB. It depends on Zn(2+) as a cofactor.

The protein localises to the cell inner membrane. Part of an energy-coupled inorganic carbon pump. The chain is Probable inorganic carbon transporter subunit DabA from Methylovorus glucosotrophus (strain SIP3-4).